The following is a 494-amino-acid chain: Transcriptional regulator calD (494 aa).

The protein resides in the nucleus. Its function is as follows. Transcription co-regulator that might be involved in the regulation of the expression of the gene cluster that mediates the biosynthesis of calbistrins and related compounds such as decumbenones. Calbistrin A is a secondary metabolite with an interesting structure that was recently found to have bioactivity against leukemia cells. It consists of two polyketides linked by an ester bond: a bicyclic decalin containing polyketide and a linear 12 carbon dioic acid structure. This is Transcriptional regulator calD from Penicillium decumbens.